We begin with the raw amino-acid sequence, 251 residues long: Imidazole glycerol phosphate synthase subunit HisF (251 aa).

Catalysis depends on residues aspartate 11 and aspartate 130.

This sequence belongs to the HisA/HisF family. As to quaternary structure, heterodimer of HisH and HisF.

The protein localises to the cytoplasm. It catalyses the reaction 5-[(5-phospho-1-deoxy-D-ribulos-1-ylimino)methylamino]-1-(5-phospho-beta-D-ribosyl)imidazole-4-carboxamide + L-glutamine = D-erythro-1-(imidazol-4-yl)glycerol 3-phosphate + 5-amino-1-(5-phospho-beta-D-ribosyl)imidazole-4-carboxamide + L-glutamate + H(+). The protein operates within amino-acid biosynthesis; L-histidine biosynthesis; L-histidine from 5-phospho-alpha-D-ribose 1-diphosphate: step 5/9. Its function is as follows. IGPS catalyzes the conversion of PRFAR and glutamine to IGP, AICAR and glutamate. The HisF subunit catalyzes the cyclization activity that produces IGP and AICAR from PRFAR using the ammonia provided by the HisH subunit. This is Imidazole glycerol phosphate synthase subunit HisF from Streptococcus mutans serotype c (strain ATCC 700610 / UA159).